We begin with the raw amino-acid sequence, 213 residues long: High frequency lysogenization protein HflD (213 aa).

Residues 79–126 (QGLNAELTRYTLSLMVLERKLSSAKGALDTLGNRINGLQRQLEHFDLQ) adopt a coiled-coil conformation.

This sequence belongs to the HflD family. Interacts with CII protein from phage lambda.

The protein resides in the cytoplasm. The protein localises to the cell inner membrane. Its function is as follows. Negative regulator of phage lambda lysogenization. Contributes to the degradation of the phage regulatory protein CII. Acts probably by holding CII on the membrane surface, away from the target promoters, but close to the FtsH protease. This chain is High frequency lysogenization protein HflD, found in Escherichia coli O127:H6 (strain E2348/69 / EPEC).